The primary structure comprises 188 residues: Large ribosomal subunit protein eL18 (188 aa).

Belongs to the eukaryotic ribosomal protein eL18 family.

It localises to the cytoplasm. The protein is Large ribosomal subunit protein eL18 (RpL18) of Drosophila melanogaster (Fruit fly).